Consider the following 723-residue polypeptide: 1,3-alpha-isomaltosidase (723 aa).

Asp451 serves as the catalytic Nucleophile. Residue Glu454 is part of the active site. Residue Asp516 is the Proton donor of the active site. A substrate-binding site is contributed by His581.

Belongs to the glycosyl hydrolase 31 family.

The protein localises to the cytoplasm. The catalysed reaction is cyclobis-(1-&gt;3)-alpha-D-isomaltosyl + 2 H2O = 2 isomaltose. Functionally, involved in the intracellular degradation of the cyclic tetrasaccharide cyclobis-(1-6)-alpha-nigerosyl (CNN) formed extracellularly from starch. Catalyzes the hydrolysis of the alpha-1,3-glucosidic linkage of cyclobis-(1-6)-alpha-nigerosyl (CNN) to yield isomaltose via a possible linear tetrasaccharide. It has a strong preference for the alpha-(1-3)-isomaltosyl moiety. The chain is 1,3-alpha-isomaltosidase from Kribbella flavida (strain DSM 17836 / JCM 10339 / NBRC 14399).